The primary structure comprises 420 residues: Histidine--tRNA ligase (420 aa).

It belongs to the class-II aminoacyl-tRNA synthetase family. As to quaternary structure, homodimer.

It localises to the cytoplasm. It catalyses the reaction tRNA(His) + L-histidine + ATP = L-histidyl-tRNA(His) + AMP + diphosphate + H(+). The polypeptide is Histidine--tRNA ligase (Thermodesulfovibrio yellowstonii (strain ATCC 51303 / DSM 11347 / YP87)).